Consider the following 189-residue polypeptide: FUN14 domain-containing protein 2 (189 aa).

The Cytoplasmic segment spans residues 1-80; sequence METSAPRAGS…GQESGPSAEK (80 aa). Serine 10 and serine 53 each carry phosphoserine. The helical transmembrane segment at 81-101 threads the bilayer; that stretch reads YSVATQLFIGGVTGWCTGFIF. At 102–107 the chain is on the mitochondrial intermembrane side; that stretch reads QKVGKL. Residues 108-128 form a helical membrane-spanning segment; the sequence is AATAVGGGFFLLQLANHTGYI. The Cytoplasmic portion of the chain corresponds to 129–164; it reads KVDWQRVEKDMKKAKEQLKIRKSNQIPTEVRSKAEE. Serine 151 is modified (phosphoserine). A helical membrane pass occupies residues 165–185; that stretch reads VVSFVKKNVLVTGGFFGGFLL. Over 186–189 the chain is Mitochondrial intermembrane; the sequence is GMAS.

The protein belongs to the FUN14 family. As to expression, highly expressed in platelets (at protein level).

The protein localises to the mitochondrion outer membrane. It localises to the nucleus. Binds directly and specifically 1,2-Diacyl-sn-glycero-3-phospho-(1'-myo-inositol-3',4',5'-bisphosphate) (PIP3) leading to the recruitment of PIP3 to mitochondria and may play a role in the regulation of the platelet activation via AKT/GSK3B/cGMP signaling pathways. May act as transcription factor that regulates SREBP1 (isoform SREBP-1C) expression in order to modulate triglyceride (TG) homeostasis in hepatocytes. The polypeptide is FUN14 domain-containing protein 2 (Homo sapiens (Human)).